Reading from the N-terminus, the 239-residue chain is Ribosomal RNA small subunit methyltransferase G (239 aa).

S-adenosyl-L-methionine contacts are provided by residues G77, F82, 128–129 (AE), and R147.

This sequence belongs to the methyltransferase superfamily. RNA methyltransferase RsmG family.

The protein localises to the cytoplasm. Its function is as follows. Specifically methylates the N7 position of guanine in position 535 of 16S rRNA. The chain is Ribosomal RNA small subunit methyltransferase G from Bacillus cereus (strain G9842).